Consider the following 87-residue polypeptide: Small ribosomal subunit protein bS20 (87 aa).

Residues 1–10 (MANIKSKQKR) are compositionally biased toward basic residues. The disordered stretch occupies residues 1–27 (MANIKSKQKRILTNEKSRQRNKSVRSA).

Belongs to the bacterial ribosomal protein bS20 family.

Functionally, binds directly to 16S ribosomal RNA. In Corynebacterium aurimucosum (strain ATCC 700975 / DSM 44827 / CIP 107346 / CN-1) (Corynebacterium nigricans), this protein is Small ribosomal subunit protein bS20.